A 460-amino-acid chain; its full sequence is uncharacterized protein (460 aa).

Residues 9–67 form the TRAM domain; sequence NFKKNDIFEAEVLDLTHEGQGVVKIDSFPFFVDNALPGERIKMHVLKVGKSFGFGRVDE. Positions 292, 321, 342, and 390 each coordinate S-adenosyl-L-methionine. The active-site Nucleophile is Cys417.

Belongs to the class I-like SAM-binding methyltransferase superfamily. RNA M5U methyltransferase family.

This is an uncharacterized protein from Lactococcus lactis subsp. lactis (strain IL1403) (Streptococcus lactis).